Reading from the N-terminus, the 271-residue chain is Mannosyl-3-phosphoglycerate phosphatase (271 aa).

Asp13 acts as the Nucleophile in catalysis. Mg(2+) contacts are provided by Asp13, Asp15, and Asp214.

This sequence belongs to the HAD-like hydrolase superfamily. MPGP family. The cofactor is Mg(2+).

The protein resides in the cytoplasm. It catalyses the reaction 2-O-(alpha-D-mannosyl)-3-phosphoglycerate + H2O = (2R)-2-O-(alpha-D-mannosyl)-glycerate + phosphate. The protein is Mannosyl-3-phosphoglycerate phosphatase of Escherichia coli (strain SMS-3-5 / SECEC).